Consider the following 1146-residue polypeptide: Nucleolar protein 6 (1146 aa).

The interval 1–48 is disordered; it reads MGPAPAGEQLRGATGEPEVMEPALEGTGKEGKKASSRKRTLAEPPAKG. Position 56 is a phosphoserine (serine 56). Positions 83-114 form a coiled coil; the sequence is LLRLQVEELLKEVRLSEKKKDRIDAFLREVNQ. A phosphoserine mark is found at serine 283, serine 289, and serine 811.

It belongs to the NRAP family. In terms of assembly, part of the small subunit (SSU) processome, composed of more than 70 proteins and the RNA chaperone small nucleolar RNA (snoRNA) U3. Interacts with RRP7A; required for NOL6 localization to nucleolus.

It is found in the nucleus. The protein localises to the nucleolus. It localises to the chromosome. Functionally, part of the small subunit (SSU) processome, first precursor of the small eukaryotic ribosomal subunit. During the assembly of the SSU processome in the nucleolus, many ribosome biogenesis factors, an RNA chaperone and ribosomal proteins associate with the nascent pre-rRNA and work in concert to generate RNA folding, modifications, rearrangements and cleavage as well as targeted degradation of pre-ribosomal RNA by the RNA exosome. This chain is Nucleolar protein 6, found in Homo sapiens (Human).